The following is a 558-amino-acid chain: Ribonuclease J (558 aa).

The Zn(2+) site is built by histidine 81, histidine 83, aspartate 85, histidine 86, histidine 148, and aspartate 170. 371-375 (HVSGH) provides a ligand contact to substrate. Zn(2+) is bound at residue histidine 397.

Belongs to the metallo-beta-lactamase superfamily. RNA-metabolizing metallo-beta-lactamase-like family. Bacterial RNase J subfamily. In terms of assembly, homodimer. The cofactor is Zn(2+).

It localises to the cytoplasm. An RNase that has endonuclease and 5'-3' exonuclease activity. The 5'-exonuclease activity acts on 5'-monophosphate but not 5'-triphosphate ends. Endonuclease activity can cleave within 4 nucleotides of the 5'-end of a triphosphorylated RNA. Plays the major role in pre-23S rRNA maturation, and a minor role in processing of pre-5S and pre-16S rRNA. In Mycolicibacterium smegmatis (strain ATCC 700084 / mc(2)155) (Mycobacterium smegmatis), this protein is Ribonuclease J.